Consider the following 452-residue polypeptide: Exoglucanase 1 (452 aa).

The signal sequence occupies residues 1–18 (MFSKFALTGSLLAGAVNA). An N-linked (GlcNAc...) asparagine glycan is attached at Asn75. The active-site Nucleophile is Glu230. The Proton donor role is filled by Glu235. N-linked (GlcNAc...) asparagine glycosylation is found at Asn335 and Asn360.

It belongs to the glycosyl hydrolase 7 (cellulase C) family.

It carries out the reaction Hydrolysis of (1-&gt;4)-beta-D-glucosidic linkages in cellulose and cellotetraose, releasing cellobiose from the non-reducing ends of the chains.. Its function is as follows. The biological conversion of cellulose to glucose generally requires three types of hydrolytic enzymes: (1) Endoglucanases which cut internal beta-1,4-glucosidic bonds; (2) Exocellobiohydrolases that cut the disaccharide cellobiose from the non-reducing end of the cellulose polymer chain; (3) Beta-1,4-glucosidases which hydrolyze the cellobiose and other short cello-oligosaccharides to glucose. The sequence is that of Exoglucanase 1 (CBH-1) from Cryphonectria parasitica (Chestnut blight fungus).